We begin with the raw amino-acid sequence, 259 residues long: Protein FAM220A (259 aa).

In terms of assembly, interacts with transcriptional activator STAT3; the interaction occurs in both the nucleus and the cytoplasm, is enhanced by IL6 and promotes STAT3 dephosphorylation, leading to negative regulation of STAT3 transcriptional activator activity. Can interact with both unphosphorylated and phosphorylated STAT3 but interacts preferentially with phosphorylated STAT3 in the nucleus. Interacts with protein phosphatase PTPN2/TC45; this promotes interaction of PTPN2 with STAT3, leading to dephosphorylation of STAT3 by PTPN2.

The protein resides in the nucleus. It localises to the cytoplasm. It is found in the cytoplasmic vesicle. Its subcellular location is the secretory vesicle. The protein localises to the acrosome. Its function is as follows. Promotes dephosphorylation of transcriptional activator STAT3 by interacting with both STAT3 and protein phosphatase PTPN2. This promotes interaction of PTPN2 with STAT3 and mediates STAT3 dephosphorylation by PTPN2, leading to negative regulation of STAT3 transcriptional activator activity. May be required for spermiogenesis or sperm function. This Macaca fascicularis (Crab-eating macaque) protein is Protein FAM220A (FAM220A).